A 232-amino-acid polypeptide reads, in one-letter code: Large ribosomal subunit protein uL1 (232 aa).

The protein belongs to the universal ribosomal protein uL1 family. As to quaternary structure, part of the 50S ribosomal subunit.

In terms of biological role, binds directly to 23S rRNA. The L1 stalk is quite mobile in the ribosome, and is involved in E site tRNA release. Its function is as follows. Protein L1 is also a translational repressor protein, it controls the translation of the L11 operon by binding to its mRNA. This is Large ribosomal subunit protein uL1 from Burkholderia vietnamiensis (strain G4 / LMG 22486) (Burkholderia cepacia (strain R1808)).